The chain runs to 677 residues: MSSSSSHFSSTAADLLAVFSSDNKDKSANKRISALKKAIAGISYGYDMSSLFPSVISSMESNNLELKKLCYLYLKIYASVKPTEAKRAVKLILNDIYSSNPMIRSLALRTLTSVNIKNFWVAAMDPIVRLLDDTDPYVRKTAAIGIAKLYSYDKKMVESSGLIDHLKEMLSDESSVVVANSLAALMNIVNSSTGFKLTFSREISNKLVKSLTDCSEWLQVAILDALIFYVPQKPGEAESFAERISPWLQHGNAAVCMGAVKVILYLTNYMKDDNRVKEYFMKTQPPLVTLLARKSSATQYVILRNIQIILEQCPEMFANDIHFFYCNFDDPIYVKLEKLDILTKIADIHNLDQILPEFVEYASEIDVELVRKSVKCIGYLAIKIEERKNDCIDSLIELMNTKVTYVIQEAVIVIRDILRKYPGSYKSLVPILYENLDSLDEPDAKSAVIWILGQYAEEIEDSITLLNDYLKGFFDEPLEIQLTLLTAVIKVFLKKPTAAADMVTNVLQWCTDEVNDPDLRDRGIIYSRMLSANPELAKKVILANMPPVNVGTGMYDPDTTEQLMLNISTLSSIYHKPPNRFVKGAQVAYCEPSPVLRLRTRDSNPSNTDSRESNHKKYNHFHQKSQTRRVMEQYDRNSWNPSPFSDESNSNTFSGKFDSADQENLGMPMTPETHLMD.

The interval 597-677 (RLRTRDSNPS…PMTPETHLMD (81 aa)) is disordered. Positions 616 to 627 (KKYNHFHQKSQT) are enriched in basic residues. A compositionally biased stretch (polar residues) spans 636–654 (RNSWNPSPFSDESNSNTFS).

The protein belongs to the adaptor complexes large subunit family. As to quaternary structure, adaptor protein complex 2 (AP-2) is a heterotetramer composed of two large adaptins (alpha-type subunit apl3 and beta-type subunit apl1), a medium chain (mu-type subunit apm4) and a small adaptin (sigma-type subunit aps2).

It localises to the cell membrane. It is found in the membrane. The protein localises to the coated pit. Its function is as follows. Adaptins are components of the adaptor complexes which link clathrin to receptors in coated vesicles. Clathrin-associated protein complexes are believed to interact with the cytoplasmic tails of membrane proteins, leading to their selection and concentration. Beta adaptin is a subunit of the plasma membrane adaptor. This chain is AP-2 complex subunit beta (apl1), found in Schizosaccharomyces pombe (strain 972 / ATCC 24843) (Fission yeast).